We begin with the raw amino-acid sequence, 498 residues long: Hexokinase-1 (498 aa).

Residues Val-4–Val-24 traverse the membrane as a helical segment. The region spanning Gly-35–Ala-488 is the Hexokinase domain. Residues Gln-89–Val-228 form a hexokinase small subdomain region. Residues Gly-104, Thr-105, and Asn-106 each contribute to the ADP site. Residues Thr-194, Lys-195, Asn-229, and Asp-230 each contribute to the D-glucose site. Positions Asn-229–Asp-477 are hexokinase large subdomain. Thr-253 is a binding site for ADP. Residues Asn-256, Glu-284, and Glu-315 each contribute to the D-glucose site. An ADP-binding site is contributed by Gly-442.

This sequence belongs to the hexokinase family. Expressed in young and mature leaves, stems, roots, stolons, and developing and mature tubers.

The protein localises to the plastid. Its subcellular location is the chloroplast outer membrane. It catalyses the reaction a D-hexose + ATP = a D-hexose 6-phosphate + ADP + H(+). The enzyme catalyses D-fructose + ATP = D-fructose 6-phosphate + ADP + H(+). It carries out the reaction D-glucose + ATP = D-glucose 6-phosphate + ADP + H(+). The protein operates within carbohydrate metabolism; hexose metabolism. Its pathway is carbohydrate degradation; glycolysis; D-glyceraldehyde 3-phosphate and glycerone phosphate from D-glucose: step 1/4. Its function is as follows. Fructose and glucose phosphorylating enzyme. May be involved in the phosphorylation of glucose during the export from plastids to cytosol. Seems neither to be involved in cell sugar sensing nor in carbohydrate metabolism in tuber. The protein is Hexokinase-1 (HXK1) of Solanum tuberosum (Potato).